A 101-amino-acid chain; its full sequence is Urease subunit beta (101 aa).

The protein belongs to the urease beta subunit family. Heterotrimer of UreA (gamma), UreB (beta) and UreC (alpha) subunits. Three heterotrimers associate to form the active enzyme.

Its subcellular location is the cytoplasm. The enzyme catalyses urea + 2 H2O + H(+) = hydrogencarbonate + 2 NH4(+). Its pathway is nitrogen metabolism; urea degradation; CO(2) and NH(3) from urea (urease route): step 1/1. This chain is Urease subunit beta, found in Rhizobium johnstonii (strain DSM 114642 / LMG 32736 / 3841) (Rhizobium leguminosarum bv. viciae).